We begin with the raw amino-acid sequence, 100 residues long: Small ribosomal subunit protein uS14c (100 aa).

It belongs to the universal ribosomal protein uS14 family. Part of the 30S ribosomal subunit.

The protein localises to the plastid. It is found in the chloroplast. Its function is as follows. Binds 16S rRNA, required for the assembly of 30S particles. The chain is Small ribosomal subunit protein uS14c from Carica papaya (Papaya).